The chain runs to 360 residues: Magnesium-protoporphyrin IX monomethyl ester [oxidative] cyclase (360 aa).

Positions 1-20 are disordered; the sequence is MVPPTAIAEASRSGGEPAIK.

It belongs to the AcsF family. Fe cation is required as a cofactor.

The catalysed reaction is Mg-protoporphyrin IX 13-monomethyl ester + 3 NADPH + 3 O2 + 2 H(+) = 3,8-divinyl protochlorophyllide a + 3 NADP(+) + 5 H2O. It functions in the pathway porphyrin-containing compound metabolism; chlorophyll biosynthesis (light-independent). Functionally, catalyzes the formation of the isocyclic ring in chlorophyll biosynthesis. Mediates the cyclase reaction, which results in the formation of divinylprotochlorophyllide (Pchlide) characteristic of all chlorophylls from magnesium-protoporphyrin IX 13-monomethyl ester (MgPMME). The protein is Magnesium-protoporphyrin IX monomethyl ester [oxidative] cyclase of Synechococcus sp. (strain RCC307).